A 201-amino-acid polypeptide reads, in one-letter code: Peptide deformylase (201 aa).

Fe cation-binding residues include cysteine 121 and histidine 163. The active site involves glutamate 164. Histidine 167 is a Fe cation binding site.

The protein belongs to the polypeptide deformylase family. Fe(2+) is required as a cofactor.

It catalyses the reaction N-terminal N-formyl-L-methionyl-[peptide] + H2O = N-terminal L-methionyl-[peptide] + formate. Functionally, removes the formyl group from the N-terminal Met of newly synthesized proteins. Requires at least a dipeptide for an efficient rate of reaction. N-terminal L-methionine is a prerequisite for activity but the enzyme has broad specificity at other positions. The chain is Peptide deformylase from Synechococcus sp. (strain CC9902).